Consider the following 308-residue polypeptide: Eukaryotic translation initiation factor 3 subunit G-A (308 aa).

Disordered regions lie at residues 1-35 (MPTG…KPDP) and 177-226 (TGDK…ADDN). Residues 185 to 194 (GAEPEPAQAP) show a composition bias toward low complexity. Basic and acidic residues predominate over residues 209 to 226 (GGSRRGESMQPNRRADDN). An RRM domain is found at 227–305 (ATIRVTNLSE…LILNVEWAKP (79 aa)).

The protein belongs to the eIF-3 subunit G family. As to quaternary structure, component of the eukaryotic translation initiation factor 3 (eIF-3) complex, which is composed of 13 subunits: eif3a, eif3b, eif3c, eif3d, eif3e, eif3f, eif3g, eif3h, eif3i, eif3j, eif3k, eif3l and eif3m.

The protein resides in the cytoplasm. Its function is as follows. RNA-binding component of the eukaryotic translation initiation factor 3 (eIF-3) complex, which is involved in protein synthesis of a specialized repertoire of mRNAs and, together with other initiation factors, stimulates binding of mRNA and methionyl-tRNAi to the 40S ribosome. The eIF-3 complex specifically targets and initiates translation of a subset of mRNAs involved in cell proliferation. This subunit can bind 18S rRNA. This Xenopus laevis (African clawed frog) protein is Eukaryotic translation initiation factor 3 subunit G-A (eif3g-a).